Consider the following 115-residue polypeptide: U17-barytoxin-Tl1b (115 aa).

The first 20 residues, 1-20 (MKTIIVFLSLLVLATKFGDA), serve as a signal peptide directing secretion. Residues 21–74 (KEGVNQKQKKEVTQNEFREEYLNEMAAMSLVQQLEAIERALFENEAGRNSRQKR) constitute a propeptide that is removed on maturation. 3 disulfides stabilise this stretch: cysteine 75-cysteine 89, cysteine 82-cysteine 94, and cysteine 88-cysteine 109.

Belongs to the neurotoxin 14 (magi-1) family. 03 (ICK-30-40) subfamily. Expressed by the venom gland.

The protein resides in the secreted. Ion channel inhibitor. This Trittame loki (Brush-footed trapdoor spider) protein is U17-barytoxin-Tl1b.